Reading from the N-terminus, the 97-residue chain is HssA/B-like protein 27 (97 aa).

Belongs to the hssA/B family.

The protein is HssA/B-like protein 27 (hssl27) of Dictyostelium discoideum (Social amoeba).